We begin with the raw amino-acid sequence, 499 residues long: Laccase (499 aa).

2 Plastocyanin-like domains span residues 2–127 (VGPV…FVVY) and 139–281 (VDND…ILRY). N-linked (GlcNAc...) asparagine glycans are attached at residues Asn-51 and Asn-54. Cu cation-binding residues include His-64, His-66, His-109, and His-111. 2 disulfides stabilise this stretch: Cys-85/Cys-488 and Cys-117/Cys-205. The residue at position 196 (Tyr-196) is a 3'-nitrotyrosine. N-linked (GlcNAc...) asparagine glycosylation is found at Asn-208, Asn-217, Asn-292, and Asn-333. In terms of domain architecture, Plastocyanin-like 3 spans 348–470 (SVPVLLQILS…GGFAVVQAED (123 aa)). Tyr-372 is subject to 3'-nitrotyrosine. Residue Asn-377 is glycosylated (N-linked (GlcNAc...) asparagine). Residues His-395, His-398, and His-400 each coordinate Cu cation. N-linked (GlcNAc...) asparagine glycans are attached at residues Asn-416 and Asn-436. Cu cation is bound by residues His-452, Cys-453, His-454, and His-458.

It belongs to the multicopper oxidase family. Cu cation serves as cofactor.

It localises to the secreted. The catalysed reaction is 4 hydroquinone + O2 = 4 benzosemiquinone + 2 H2O. Functionally, lignin degradation and detoxification of lignin-derived products. The chain is Laccase from Trametes maxima (White-rot fungus).